The following is a 346-amino-acid chain: DNA repair protein XRCC3 (346 aa).

At M1 the chain carries N-acetylmethionine. 107 to 114 (GRSSAGKT) is a binding site for ATP.

It belongs to the RecA family. RAD51 subfamily. Interacts with RAD51C and RAD51. Part of the CX3 complex consisting of RAD51C and XRCC3; the complex has a ring-like structure arranged into a flat disk around a central channel; CX3 can interact with RAD51 in vitro. Forms a complex with FANCD2, BRCA2 and phosphorylated FANCG. Interacts with SWSAP1 and ZSWIM7; involved in homologous recombination repair. Interacts directly with PALB2 which may serve as a scaffold for a HR complex containing PALB2, BRCA2, RAD51C, RAD51 and XRCC3.

It localises to the nucleus. The protein resides in the cytoplasm. Its subcellular location is the perinuclear region. It is found in the mitochondrion. Its function is as follows. Involved in the homologous recombination repair (HRR) pathway of double-stranded DNA, thought to repair chromosomal fragmentation, translocations and deletions. Part of the RAD51 paralog protein complex CX3 which acts in the BRCA1-BRCA2-dependent HR pathway. Upon DNA damage, CX3 acts downstream of RAD51 recruitment; the complex binds predominantly to the intersection of the four duplex arms of the Holliday junction (HJ) and to junctions of replication forks. Involved in HJ resolution and thus in processing HR intermediates late in the DNA repair process; the function may be linked to the CX3 complex and seems to involve GEN1 during mitotic cell cycle progression. Part of a PALB2-scaffolded HR complex containing BRCA2 and RAD51C and which is thought to play a role in DNA repair by HR. Plays a role in regulating mitochondrial DNA copy number under conditions of oxidative stress in the presence of RAD51 and RAD51C. The polypeptide is DNA repair protein XRCC3 (XRCC3) (Homo sapiens (Human)).